We begin with the raw amino-acid sequence, 519 residues long: Alkaline phosphatase, tissue-nonspecific isozyme (519 aa).

The first 16 residues, 1 to 16 (MKAFLLTLLAQLCSAS), serve as a signal peptide directing secretion. Aspartate 59 provides a ligand contact to Mg(2+). The Zn(2+) site is built by aspartate 59 and serine 109. The Phosphoserine intermediate role is filled by serine 109. A disulfide bond links cysteine 138 and cysteine 200. Asparagine 139 carries N-linked (GlcNAc...) asparagine glycosylation. Threonine 172 provides a ligand contact to Mg(2+). N-linked (GlcNAc...) asparagine glycosylation is present at asparagine 229. Residue glutamate 234 coordinates Ca(2+). N-linked (GlcNAc...) asparagine glycosylation occurs at asparagine 278. Residues phenylalanine 289 and glutamate 290 each contribute to the Ca(2+) site. Asparagine 302 carries N-linked (GlcNAc...) asparagine glycosylation. Aspartate 305 lines the Ca(2+) pocket. Glutamate 331 lines the Mg(2+) pocket. Zn(2+) contacts are provided by aspartate 336, histidine 340, aspartate 377, and histidine 378. Asparagine 429 is a glycosylation site (N-linked (GlcNAc...) asparagine). Histidine 453 lines the Zn(2+) pocket. A disulfide bridge links cysteine 488 with cysteine 496. Residue serine 498 is the site of GPI-anchor amidated serine attachment. The propeptide at 499-519 (AARPAATATLLPVLLLLLLLC) is removed in mature form.

This sequence belongs to the alkaline phosphatase family. In terms of assembly, homodimer. Requires Mg(2+) as cofactor. Zn(2+) serves as cofactor. The cofactor is Ca(2+).

Its subcellular location is the cell membrane. It is found in the extracellular vesicle membrane. It carries out the reaction a phosphate monoester + H2O = an alcohol + phosphate. The enzyme catalyses diphosphate + H2O = 2 phosphate + H(+). It catalyses the reaction pyridoxal 5'-phosphate + H2O = pyridoxal + phosphate. The catalysed reaction is phosphoethanolamine + H2O = ethanolamine + phosphate. It carries out the reaction ATP + H2O = ADP + phosphate + H(+). The enzyme catalyses ADP + H2O = AMP + phosphate + H(+). It catalyses the reaction AMP + H2O = adenosine + phosphate. Functionally, alkaline phosphatase that metabolizes various phosphate compounds and plays a key role in skeletal mineralization and adaptive thermogenesis. Has broad substrate specificity and can hydrolyze a considerable variety of compounds: however, only a few substrates, such as diphosphate (inorganic pyrophosphate; PPi) and pyridoxal 5'-phosphate (PLP) are natural substrates. Plays an essential role in skeletal and dental mineralization via its ability to hydrolyze extracellular diphosphate, a potent mineralization inhibitor, to phosphate: it thereby promotes hydroxyapatite crystal formation and increases inorganic phosphate concentration. Catalyzes dephosphorylation of PLP to pyridoxal (PL), the transportable form of vitamin B6, in order to provide a sufficient amount of PLP in the brain, an essential cofactor for enzymes catalyzing the synthesis of diverse neurotransmitters. Additionally, also able to mediate ATP degradation in a stepwise manner to adenosine, thereby regulating the availability of ligands for purinergic receptors. Involved in the establishment and growth of feather germs. This chain is Alkaline phosphatase, tissue-nonspecific isozyme (ALPL), found in Gallus gallus (Chicken).